The sequence spans 157 residues: MKLLKGLPVAKDVRVAIVGACFNAPIADRLVSGARETFFESGGSPDSLTVVRVPGAFEIPCAIKKMLSKGNLFQAIVACGVLIQGETSHYEHIADNVAAGIARLSVEFCLPITFSVITAPNVEAAWERAGIKGPNLGASGMRTALEMASLFSLIEKE.

Residues phenylalanine 22, 56–58 (AFE), and 81–83 (VLI) each bind 5-amino-6-(D-ribitylamino)uracil. 86 to 87 (ET) is a binding site for (2S)-2-hydroxy-3-oxobutyl phosphate. Histidine 89 (proton donor) is an active-site residue. 5-amino-6-(D-ribitylamino)uracil is bound at residue phenylalanine 114. Arginine 128 serves as a coordination point for (2S)-2-hydroxy-3-oxobutyl phosphate.

The protein belongs to the DMRL synthase family.

The enzyme catalyses (2S)-2-hydroxy-3-oxobutyl phosphate + 5-amino-6-(D-ribitylamino)uracil = 6,7-dimethyl-8-(1-D-ribityl)lumazine + phosphate + 2 H2O + H(+). It participates in cofactor biosynthesis; riboflavin biosynthesis; riboflavin from 2-hydroxy-3-oxobutyl phosphate and 5-amino-6-(D-ribitylamino)uracil: step 1/2. Its function is as follows. Catalyzes the formation of 6,7-dimethyl-8-ribityllumazine by condensation of 5-amino-6-(D-ribitylamino)uracil with 3,4-dihydroxy-2-butanone 4-phosphate. This is the penultimate step in the biosynthesis of riboflavin. In Chlamydia muridarum (strain MoPn / Nigg), this protein is 6,7-dimethyl-8-ribityllumazine synthase.